Reading from the N-terminus, the 366-residue chain is tRNA/tmRNA (uracil-C(5))-methyltransferase (366 aa).

5 residues coordinate S-adenosyl-L-methionine: Q190, Y218, N223, E239, and D299. C324 acts as the Nucleophile in catalysis. E358 functions as the Proton acceptor in the catalytic mechanism.

It belongs to the class I-like SAM-binding methyltransferase superfamily. RNA M5U methyltransferase family. TrmA subfamily.

The enzyme catalyses uridine(54) in tRNA + S-adenosyl-L-methionine = 5-methyluridine(54) in tRNA + S-adenosyl-L-homocysteine + H(+). The catalysed reaction is uridine(341) in tmRNA + S-adenosyl-L-methionine = 5-methyluridine(341) in tmRNA + S-adenosyl-L-homocysteine + H(+). Functionally, dual-specificity methyltransferase that catalyzes the formation of 5-methyluridine at position 54 (m5U54) in all tRNAs, and that of position 341 (m5U341) in tmRNA (transfer-mRNA). This Salmonella heidelberg (strain SL476) protein is tRNA/tmRNA (uracil-C(5))-methyltransferase.